The primary structure comprises 131 residues: Small ribosomal subunit protein eS6 (131 aa).

This sequence belongs to the eukaryotic ribosomal protein eS6 family.

In Halobacterium salinarum (strain ATCC 29341 / DSM 671 / R1), this protein is Small ribosomal subunit protein eS6.